Consider the following 108-residue polypeptide: ATP synthase peripheral stalk subunit F6, mitochondrial (108 aa).

The N-terminal 32 residues, 1-32, are a transit peptide targeting the mitochondrion; it reads MTVQRIFRLSSVLRSAVSVHLRRNIGVTAVAF. 3 positions are modified to N6-acetyllysine: Lys41, Lys46, and Lys79. An N6-acetyllysine; alternate mark is found at Lys84 and Lys99. Residues Lys84 and Lys99 each carry the N6-succinyllysine; alternate modification. At Lys105 the chain carries N6-acetyllysine. The residue at position 108 (Ser108) is a Phosphoserine.

It belongs to the eukaryotic ATPase subunit F6 family. Component of the ATP synthase complex composed at least of ATP5F1A/subunit alpha, ATP5F1B/subunit beta, ATP5MC1/subunit c (homooctomer), MT-ATP6/subunit a, MT-ATP8/subunit 8, ATP5ME/subunit e, ATP5MF/subunit f, ATP5MG/subunit g, ATP5MK/subunit k, ATP5MJ/subunit j, ATP5F1C/subunit gamma, ATP5F1D/subunit delta, ATP5F1E/subunit epsilon, ATP5PF/subunit F6, ATP5PB/subunit b, ATP5PD/subunit d, ATP5PO/subunit OSCP. ATP synthase complex consists of a soluble F(1) head domain (subunits alpha(3) and beta(3)) - the catalytic core - and a membrane F(0) domain - the membrane proton channel (subunits c, a, 8, e, f, g, k and j). These two domains are linked by a central stalk (subunits gamma, delta, and epsilon) rotating inside the F1 region and a stationary peripheral stalk (subunits F6, b, d, and OSCP).

Its subcellular location is the mitochondrion. The protein localises to the mitochondrion inner membrane. Functionally, subunit F6, of the mitochondrial membrane ATP synthase complex (F(1)F(0) ATP synthase or Complex V) that produces ATP from ADP in the presence of a proton gradient across the membrane which is generated by electron transport complexes of the respiratory chain. ATP synthase complex consist of a soluble F(1) head domain - the catalytic core - and a membrane F(1) domain - the membrane proton channel. These two domains are linked by a central stalk rotating inside the F(1) region and a stationary peripheral stalk. During catalysis, ATP synthesis in the catalytic domain of F(1) is coupled via a rotary mechanism of the central stalk subunits to proton translocation. In vivo, can only synthesize ATP although its ATP hydrolase activity can be activated artificially in vitro. Part of the complex F(0) domain. Part of the complex F(0) domain and the peripheric stalk, which acts as a stator to hold the catalytic alpha(3)beta(3) subcomplex and subunit a/ATP6 static relative to the rotary elements. This Rattus norvegicus (Rat) protein is ATP synthase peripheral stalk subunit F6, mitochondrial.